A 224-amino-acid polypeptide reads, in one-letter code: UPF0758 protein Lm4b_01560 (224 aa).

The MPN domain occupies 102–224 (VVRCPEDAVK…YISLKEKGYF (123 aa)). Zn(2+) contacts are provided by histidine 173, histidine 175, and aspartate 186. Positions 173-186 (HNHPSGDPTPSSED) match the JAMM motif motif.

It belongs to the UPF0758 family.

This Listeria monocytogenes serotype 4b (strain CLIP80459) protein is UPF0758 protein Lm4b_01560.